A 187-amino-acid polypeptide reads, in one-letter code: Adenylate kinase (187 aa).

Position 11–16 (11–16 (GAGKGT)) interacts with ATP. An NMP region spans residues 31-60 (STGDILREAVKNQTPMGIEAKRYMDAGDLV). AMP-binding positions include Thr-32, Arg-37, 58–60 (DLV), 86–89 (GFPR), and Gln-93. Positions 127–137 (GRAEIEGRADD) are LID. Arg-128 provides a ligand contact to ATP. Residues Arg-134 and Arg-145 each coordinate AMP. Gly-173 is a binding site for ATP.

It belongs to the adenylate kinase family. In terms of assembly, monomer.

It is found in the cytoplasm. It catalyses the reaction AMP + ATP = 2 ADP. Its pathway is purine metabolism; AMP biosynthesis via salvage pathway; AMP from ADP: step 1/1. Its function is as follows. Catalyzes the reversible transfer of the terminal phosphate group between ATP and AMP. Plays an important role in cellular energy homeostasis and in adenine nucleotide metabolism. The protein is Adenylate kinase of Leptospira borgpetersenii serovar Hardjo-bovis (strain JB197).